The following is a 52-amino-acid chain: Nuclear respiratory factor 1 (52 aa).

This sequence belongs to the NRF1/Ewg family. In terms of assembly, homodimer. Binds DNA as a dimer. Interacts with PPRC1. Phosphorylation enhances DNA binding. Expressed at high levels in the lung and testis, at intermediate levels in the kidney, heart and brain and at low levels in the muscle and liver.

It is found in the nucleus. Transcription factor that activates the expression of the EIF2S1 (EIF2-alpha) gene. Links the transcriptional modulation of key metabolic genes to cellular growth and development. Implicated in the control of nuclear genes required for respiration, heme biosynthesis, and mitochondrial DNA transcription and replication. The protein is Nuclear respiratory factor 1 (Nrf1) of Rattus norvegicus (Rat).